Here is a 149-residue protein sequence, read N- to C-terminus: Arginine repressor (149 aa).

It belongs to the ArgR family. As to quaternary structure, homohexamer.

It localises to the cytoplasm. Its pathway is amino-acid biosynthesis; L-arginine biosynthesis [regulation]. Functionally, regulates arginine biosynthesis genes. This chain is Arginine repressor (argR), found in Geobacillus stearothermophilus (Bacillus stearothermophilus).